A 395-amino-acid chain; its full sequence is D-serine dehydratase (395 aa).

The residue at position 46 (Lys-46) is an N6-(pyridoxal phosphate)lysine. Positions 184, 191, 232, 254, and 255 each coordinate pyridoxal 5'-phosphate. The Zn(2+) site is built by His-365 and Cys-367.

This sequence belongs to the DSD1 family. The cofactor is pyridoxal 5'-phosphate. It depends on Zn(2+) as a cofactor.

The catalysed reaction is D-serine = pyruvate + NH4(+). In terms of biological role, catalyzes the conversion of D-serine to pyruvate and ammonia. Plays a role in D-serine detoxification. The sequence is that of D-serine dehydratase from Dictyostelium discoideum (Social amoeba).